Reading from the N-terminus, the 122-residue chain is Semaphorin-like protein A43 (122 aa).

The region spanning 1 to 122 (MIYLYTADNV…RIMYLFYEYH (122 aa)) is the Sema domain.

The protein belongs to the semaphorin family.

The protein is Semaphorin-like protein A43 (A43R) of Homo sapiens (Human).